The chain runs to 91 residues: Small ribosomal subunit protein bS18 (91 aa).

The protein belongs to the bacterial ribosomal protein bS18 family. Part of the 30S ribosomal subunit. Forms a tight heterodimer with protein bS6.

In terms of biological role, binds as a heterodimer with protein bS6 to the central domain of the 16S rRNA, where it helps stabilize the platform of the 30S subunit. The chain is Small ribosomal subunit protein bS18 from Burkholderia ambifaria (strain MC40-6).